Here is a 189-residue protein sequence, read N- to C-terminus: Mediator of RNA polymerase II transcription subunit 10b (189 aa).

The tract at residues 1–22 (MDPTQNTSAGIGGSNGTIRYQT) is disordered.

This sequence belongs to the Mediator complex subunit 10 family. As to quaternary structure, component of the Mediator complex.

It is found in the nucleus. Component of the Mediator complex, a coactivator involved in the regulated transcription of nearly all RNA polymerase II-dependent genes. Mediator functions as a bridge to convey information from gene-specific regulatory proteins to the basal RNA polymerase II transcription machinery. The Mediator complex, having a compact conformation in its free form, is recruited to promoters by direct interactions with regulatory proteins and serves for the assembly of a functional preinitiation complex with RNA polymerase II and the general transcription factors. The chain is Mediator of RNA polymerase II transcription subunit 10b (MED10B) from Arabidopsis thaliana (Mouse-ear cress).